Here is a 624-residue protein sequence, read N- to C-terminus: Polygalacturonase 1 beta-like protein 2 (624 aa).

The signal sequence occupies residues 1-26 (MNNIEATLFLCFFCIFSSSNVHFAGA). One copy of the FXXY 1 repeat lies at 121–124 (FAAY). N128 is a glycosylation site (N-linked (GlcNAc...) asparagine). FXXY repeat units follow at residues 129–132 (FTNY), 143–146 (FKNY), 157–160 (FRRY), 171–174 (FTNY), 185–188 (FTTY), 199–202 (FTNY), 213–216 (FTSY), 227–230 (FTTY), 241–244 (FTSY), 255–258 (FSGY), and 269–272 (FTKY). N-linked (GlcNAc...) asparagine glycosylation is present at N145. Positions 199–219 (FTNYNTDANEPNGRFTSYSDK) are disordered. N280 is a glycosylation site (N-linked (GlcNAc...) asparagine). FXXY repeat units follow at residues 283–286 (FTSY), 297–300 (FKGY), 311–314 (FKNY), 325–328 (FSSY), and 339–342 (FVNY). A glycan (N-linked (GlcNAc...) asparagine) is linked at N352. One copy of the FXXY 18 repeat lies at 353 to 356 (FTGY). Residue N364 is glycosylated (N-linked (GlcNAc...) asparagine). FXXY repeat units lie at residues 367–370 (FKTY), 376–379 (FKVY), and 386–389 (FARY). N-linked (GlcNAc...) asparagine glycans are attached at residues N392 and N463. One can recognise a BURP domain in the interval 409-623 (FFREAMLKEG…FENDMTWNII (215 aa)).

Expressed in flowers and stems.

The protein resides in the secreted. It is found in the extracellular space. The protein localises to the apoplast. Its subcellular location is the cell wall. In terms of biological role, involved in cell size determination. The polypeptide is Polygalacturonase 1 beta-like protein 2 (Arabidopsis thaliana (Mouse-ear cress)).